We begin with the raw amino-acid sequence, 163 residues long: Ribonuclease P protein component 4 (163 aa).

Zn(2+) is bound by residues cysteine 66, cysteine 69, cysteine 96, and cysteine 99. A disordered region spans residues 110 to 163 (GPRGGAPISPPAAEYGSGGRDSGEREDKGPQGPPRQGGRDNRQGGGHQGGPKGD). Positions 152–163 (QGGGHQGGPKGD) are enriched in gly residues.

The protein belongs to the eukaryotic/archaeal RNase P protein component 4 family. Consists of a catalytic RNA component and at least 4-5 protein subunits. It depends on Zn(2+) as a cofactor.

The protein localises to the cytoplasm. The enzyme catalyses Endonucleolytic cleavage of RNA, removing 5'-extranucleotides from tRNA precursor.. In terms of biological role, part of ribonuclease P, a protein complex that generates mature tRNA molecules by cleaving their 5'-ends. This Aeropyrum pernix (strain ATCC 700893 / DSM 11879 / JCM 9820 / NBRC 100138 / K1) protein is Ribonuclease P protein component 4.